The primary structure comprises 120 residues: Small ribosomal subunit protein bS16 (120 aa).

The disordered stretch occupies residues 80–120 (GLKKRPARNNPHKGEPGKKAQERIAAAKQAAEDAKAAEASA). Positions 81 to 90 (LKKRPARNNP) are enriched in basic residues. Basic and acidic residues-rich tracts occupy residues 91–101 (HKGEPGKKAQE) and 109–120 (AAEDAKAAEASA).

Belongs to the bacterial ribosomal protein bS16 family.

The sequence is that of Small ribosomal subunit protein bS16 from Bartonella bacilliformis (strain ATCC 35685 / KC583 / Herrer 020/F12,63).